We begin with the raw amino-acid sequence, 300 residues long: Protoheme IX farnesyltransferase (300 aa).

A run of 9 helical transmembrane segments spans residues Val24–Val44, Trp46–Ile66, Pro94–Phe114, Leu118–Leu138, Ile146–Gly166, Ala172–Leu192, Leu217–Gly237, Ser239–Trp259, and Ile278–Leu298.

It belongs to the UbiA prenyltransferase family. Protoheme IX farnesyltransferase subfamily.

Its subcellular location is the cell inner membrane. The enzyme catalyses heme b + (2E,6E)-farnesyl diphosphate + H2O = Fe(II)-heme o + diphosphate. It participates in porphyrin-containing compound metabolism; heme O biosynthesis; heme O from protoheme: step 1/1. Converts heme B (protoheme IX) to heme O by substitution of the vinyl group on carbon 2 of heme B porphyrin ring with a hydroxyethyl farnesyl side group. In Burkholderia lata (strain ATCC 17760 / DSM 23089 / LMG 22485 / NCIMB 9086 / R18194 / 383), this protein is Protoheme IX farnesyltransferase.